A 455-amino-acid chain; its full sequence is DNA repair protein RadA (455 aa).

A C4-type zinc finger spans residues 11 to 28; sequence CVGCGYVHPKWLGRCPEC. 97–104 contacts ATP; the sequence is GEPGIGKS. Residues 250-254 carry the RadA KNRFG motif motif; that stretch reads KNRFG. The interval 350–455 is lon-protease-like; sequence DIYVNVAGGI…IAEIFSKAKA (106 aa).

The protein belongs to the RecA family. RadA subfamily.

Its function is as follows. DNA-dependent ATPase involved in processing of recombination intermediates, plays a role in repairing DNA breaks. Stimulates the branch migration of RecA-mediated strand transfer reactions, allowing the 3' invading strand to extend heteroduplex DNA faster. Binds ssDNA in the presence of ADP but not other nucleotides, has ATPase activity that is stimulated by ssDNA and various branched DNA structures, but inhibited by SSB. Does not have RecA's homology-searching function. This Treponema pallidum (strain Nichols) protein is DNA repair protein RadA.